The sequence spans 293 residues: Protein phosphatase 1 regulatory subunit 3B (293 aa).

Residues 129–237 (RQRIENDHVC…NNQGKNYRII (109 aa)) form the CBM21 domain.

In terms of assembly, interacts with glycogen, PPP1CC catalytic subunit of PP1 and PYGL. Associates with glycogen particles. Forms complexes with debranching enzyme, glycogen phosphorylase, glycogen synthase and phosphorylase kinase which is necessary for its regulation of PP1 activity.

Acts as a glycogen-targeting subunit for phosphatase PP1. Facilitates interaction of the PP1 with enzymes of the glycogen metabolism and regulates its activity. Suppresses the rate at which PP1 dephosphorylates (inactivates) glycogen phosphorylase and enhances the rate at which it activates glycogen synthase and therefore limits glycogen breakdown. This chain is Protein phosphatase 1 regulatory subunit 3B (ppp1r3b), found in Danio rerio (Zebrafish).